A 276-amino-acid polypeptide reads, in one-letter code: Small ribosomal subunit protein uS5w (276 aa).

The segment covering 1–15 (MAERGVERGGDRGDF) has biased composition (basic and acidic residues). The segment at 1-42 (MAERGVERGGDRGDFGRGFGGRGGGRGGPRGRGRRAGRAPEE) is disordered. A compositionally biased stretch (gly residues) spans 16–28 (GRGFGGRGGGRGG). The S5 DRBM domain occupies 87–150 (LKDEVMKIMP…ILAKLSVVPI (64 aa)).

The protein belongs to the universal ribosomal protein uS5 family.

The polypeptide is Small ribosomal subunit protein uS5w (RPS2D) (Arabidopsis thaliana (Mouse-ear cress)).